The primary structure comprises 447 residues: UPF0210 protein LSL_0162 (447 aa).

Belongs to the UPF0210 family. Homodimer.

In Ligilactobacillus salivarius (strain UCC118) (Lactobacillus salivarius), this protein is UPF0210 protein LSL_0162.